Here is a 512-residue protein sequence, read N- to C-terminus: MNLFDLSILPFLNLAQVVNESRVPNVPDLLSVLPALVLATGGVFLICLSVLFKTKEFIIVRYVSGLILLLAFAAVFYTSFRFPGNGFHFSGQIENSVLSFWLNLIYISMAIGTAAIVPRILKNHKIEFPEFYPLLLFATCGMTLMTTGQDFILVFVALELMSICLYILIGMARSDLFSLEATLKYFLLGSFSSGFMLMGIAFLFGGSGSTNITEALKPLTIAGYQGNFAKIGLVLFITGVAFKIALFPYHAWTPDAYEGALTPVTGYMSTAAKAASIGLLLILYTKLPLPLENSTWAWLPGILALCSMIYGNLLALKQENLKRMLAYSSIAHAGYVVAGISAGIKEEVLFYLIVYSFMSLGAFAILAYLEEGTRQVTFFSVQSLSGVKPLTAIAINIFFMSLAGVPPFGGFWAKLFLFQKLAESETLMNRILLIGGVTNSALALYYYLRIGIATFMSSDEGEISRNHAAPYSVGVTGVVLFCLLMVSVGWFLLVPGNLLALGELWLSSSIFR.

Helical transmembrane passes span 32-52 (VLPALVLATGGVFLICLSVLF), 57-77 (FIIVRYVSGLILLLAFAAVFY), 97-117 (VLSFWLNLIYISMAIGTAAIV), 126-146 (IEFPEFYPLLLFATCGMTLMT), 151-171 (FILVFVALELMSICLYILIGM), 186-206 (FLLGSFSSGFMLMGIAFLFGG), 231-251 (IGLVLFITGVAFKIALFPYHA), 264-284 (VTGYMSTAAKAASIGLLLILY), 296-316 (WAWLPGILALCSMIYGNLLAL), 324-344 (MLAYSSIAHAGYVVAGISAGI), 348-368 (VLFYLIVYSFMSLGAFAILAY), 392-412 (AIAINIFFMSLAGVPPFGGFW), 431-451 (ILLIGGVTNSALALYYYLRIG), and 473-493 (VGVTGVVLFCLLMVSVGWFLL).

The protein belongs to the complex I subunit 2 family. NDH-1 is composed of 14 different subunits. Subunits NuoA, H, J, K, L, M, N constitute the membrane sector of the complex.

The protein resides in the cell inner membrane. The enzyme catalyses a quinone + NADH + 5 H(+)(in) = a quinol + NAD(+) + 4 H(+)(out). In terms of biological role, NDH-1 shuttles electrons from NADH, via FMN and iron-sulfur (Fe-S) centers, to quinones in the respiratory chain. The immediate electron acceptor for the enzyme in this species is believed to be ubiquinone. Couples the redox reaction to proton translocation (for every two electrons transferred, four hydrogen ions are translocated across the cytoplasmic membrane), and thus conserves the redox energy in a proton gradient. This is NADH-quinone oxidoreductase subunit N from Leptospira interrogans serogroup Icterohaemorrhagiae serovar Lai (strain 56601).